The following is a 343-amino-acid chain: Phosphate acyltransferase (343 aa).

The protein belongs to the PlsX family. As to quaternary structure, homodimer. Probably interacts with PlsY.

It is found in the cytoplasm. The enzyme catalyses a fatty acyl-[ACP] + phosphate = an acyl phosphate + holo-[ACP]. The protein operates within lipid metabolism; phospholipid metabolism. Its function is as follows. Catalyzes the reversible formation of acyl-phosphate (acyl-PO(4)) from acyl-[acyl-carrier-protein] (acyl-ACP). This enzyme utilizes acyl-ACP as fatty acyl donor, but not acyl-CoA. This is Phosphate acyltransferase from Neorickettsia sennetsu (strain ATCC VR-367 / Miyayama) (Ehrlichia sennetsu).